The sequence spans 225 residues: Germin-like protein 3-8 (225 aa).

Positions 1–25 (MSRTSSAPLLVLSAALAVLASTCIA) are cleaved as a signal peptide. A disulfide bond links Cys-34 and Cys-57. One can recognise a Cupin type-1 domain in the interval 71-219 (AGLAVASDTD…SFQVDAKIIK (149 aa)). Asn-86 is a glycosylation site (N-linked (GlcNAc...) asparagine). 4 residues coordinate Mn(2+): His-119, His-121, Glu-126, and His-165.

This sequence belongs to the germin family. As to quaternary structure, oligomer (believed to be a pentamer but probably hexamer).

It is found in the secreted. The protein localises to the extracellular space. It localises to the apoplast. In terms of biological role, may play a role in plant defense. Probably has no oxalate oxidase activity even if the active site is conserved. The chain is Germin-like protein 3-8 from Oryza sativa subsp. japonica (Rice).